The sequence spans 324 residues: Annexin A3 (324 aa).

Annexin repeat units lie at residues 19–90, 91–162, 174–246, and 250–321; these read FNPS…ALIT, APAV…TLAD, HLAK…AVVR, and NTPA…KICG. An N6-acetyllysine modification is found at lysine 178. Threonine 268 carries the phosphothreonine modification.

Belongs to the annexin family.

In terms of biological role, inhibitor of phospholipase A2, also possesses anti-coagulant properties. In Rattus norvegicus (Rat), this protein is Annexin A3 (Anxa3).